Here is a 262-residue protein sequence, read N- to C-terminus: tRNA (guanine-N(1)-)-methyltransferase (262 aa).

Residues G112 and 132–137 each bind S-adenosyl-L-methionine; that span reads IGDYIL.

The protein belongs to the RNA methyltransferase TrmD family. Homodimer.

It is found in the cytoplasm. The enzyme catalyses guanosine(37) in tRNA + S-adenosyl-L-methionine = N(1)-methylguanosine(37) in tRNA + S-adenosyl-L-homocysteine + H(+). Its function is as follows. Specifically methylates guanosine-37 in various tRNAs. The polypeptide is tRNA (guanine-N(1)-)-methyltransferase (Desulfatibacillum aliphaticivorans).